A 488-amino-acid polypeptide reads, in one-letter code: Bifunctional protein GlmU (488 aa).

The segment at 1-237 is pyrophosphorylase; the sequence is MPRTRTPLAA…VEEASGVNDR (237 aa). UDP-N-acetyl-alpha-D-glucosamine is bound by residues 13 to 16, K27, Q82, 87 to 88, 110 to 112, G149, E164, N179, and N235; these read LAAG, GT, and SGD. D112 is a Mg(2+) binding site. Residue N235 participates in Mg(2+) binding. A linker region spans residues 238-258; it reads VELSRANRVMVGRLAEAFMRA. An N-acetyltransferase region spans residues 259–488; it reads GVTIEDPARF…KGRPAARRAS (230 aa). Positions 341 and 359 each coordinate UDP-N-acetyl-alpha-D-glucosamine. H371 (proton acceptor) is an active-site residue. UDP-N-acetyl-alpha-D-glucosamine contacts are provided by Y374 and N385. Acetyl-CoA is bound by residues A388, 394 to 395, S413, A431, and R448; that span reads NY. Positions 459-488 are disordered; the sequence is AQRQAEKQMKGTATGPASARKGRPAARRAS. Over residues 478-488 the composition is skewed to basic residues; that stretch reads RKGRPAARRAS.

The protein in the N-terminal section; belongs to the N-acetylglucosamine-1-phosphate uridyltransferase family. In the C-terminal section; belongs to the transferase hexapeptide repeat family. Homotrimer. Mg(2+) serves as cofactor.

It is found in the cytoplasm. The catalysed reaction is alpha-D-glucosamine 1-phosphate + acetyl-CoA = N-acetyl-alpha-D-glucosamine 1-phosphate + CoA + H(+). It catalyses the reaction N-acetyl-alpha-D-glucosamine 1-phosphate + UTP + H(+) = UDP-N-acetyl-alpha-D-glucosamine + diphosphate. It functions in the pathway nucleotide-sugar biosynthesis; UDP-N-acetyl-alpha-D-glucosamine biosynthesis; N-acetyl-alpha-D-glucosamine 1-phosphate from alpha-D-glucosamine 6-phosphate (route II): step 2/2. It participates in nucleotide-sugar biosynthesis; UDP-N-acetyl-alpha-D-glucosamine biosynthesis; UDP-N-acetyl-alpha-D-glucosamine from N-acetyl-alpha-D-glucosamine 1-phosphate: step 1/1. Its pathway is bacterial outer membrane biogenesis; LPS lipid A biosynthesis. Functionally, catalyzes the last two sequential reactions in the de novo biosynthetic pathway for UDP-N-acetylglucosamine (UDP-GlcNAc). The C-terminal domain catalyzes the transfer of acetyl group from acetyl coenzyme A to glucosamine-1-phosphate (GlcN-1-P) to produce N-acetylglucosamine-1-phosphate (GlcNAc-1-P), which is converted into UDP-GlcNAc by the transfer of uridine 5-monophosphate (from uridine 5-triphosphate), a reaction catalyzed by the N-terminal domain. The protein is Bifunctional protein GlmU of Anaeromyxobacter sp. (strain K).